The sequence spans 608 residues: 1-deoxy-D-xylulose-5-phosphate synthase (608 aa).

Residues His80 and 121 to 123 (GHS) contribute to the thiamine diphosphate site. A Mg(2+)-binding site is contributed by Asp152. Residues 153–154 (GA), Asn181, Tyr282, and Glu357 each bind thiamine diphosphate. Mg(2+) is bound at residue Asn181.

It belongs to the transketolase family. DXPS subfamily. Homodimer. The cofactor is Mg(2+). Thiamine diphosphate is required as a cofactor.

The enzyme catalyses D-glyceraldehyde 3-phosphate + pyruvate + H(+) = 1-deoxy-D-xylulose 5-phosphate + CO2. It functions in the pathway metabolic intermediate biosynthesis; 1-deoxy-D-xylulose 5-phosphate biosynthesis; 1-deoxy-D-xylulose 5-phosphate from D-glyceraldehyde 3-phosphate and pyruvate: step 1/1. Catalyzes the acyloin condensation reaction between C atoms 2 and 3 of pyruvate and glyceraldehyde 3-phosphate to yield 1-deoxy-D-xylulose-5-phosphate (DXP). This is 1-deoxy-D-xylulose-5-phosphate synthase from Buchnera aphidicola subsp. Acyrthosiphon pisum (strain 5A).